Reading from the N-terminus, the 513-residue chain is Histidine ammonia-lyase (513 aa).

A cross-link (5-imidazolinone (Ala-Gly)) is located at residues 144 to 146 (ASG). Residue Ser-145 is modified to 2,3-didehydroalanine (Ser).

It belongs to the PAL/histidase family. In terms of processing, contains an active site 4-methylidene-imidazol-5-one (MIO), which is formed autocatalytically by cyclization and dehydration of residues Ala-Ser-Gly.

It is found in the cytoplasm. It catalyses the reaction L-histidine = trans-urocanate + NH4(+). It functions in the pathway amino-acid degradation; L-histidine degradation into L-glutamate; N-formimidoyl-L-glutamate from L-histidine: step 1/3. This Streptococcus pyogenes serotype M3 (strain ATCC BAA-595 / MGAS315) protein is Histidine ammonia-lyase.